The sequence spans 67 residues: MATKETGGQKHATRRNQEVEEIEVTTETSVRNEKLAEDVDDILDEIDEVLESNAEDFVRQFVQKGGE.

The segment at 1 to 26 (MATKETGGQKHATRRNQEVEEIEVTT) is disordered. Residues 23–61 (EVTTETSVRNEKLAEDVDDILDEIDEVLESNAEDFVRQF) are ARC ATPase binding. A coiled-coil region spans residues 27–55 (ETSVRNEKLAEDVDDILDEIDEVLESNAE). Glu67 participates in a covalent cross-link: Isoglutamyl lysine isopeptide (Glu-Lys) (interchain with K-? in acceptor proteins).

The protein belongs to the prokaryotic ubiquitin-like protein family. Strongly interacts with the proteasome-associated ATPase ARC through a hydrophobic interface; the interacting region of Pup lies in its C-terminal half. There is one Pup binding site per ARC hexamer ring.

The protein operates within protein degradation; proteasomal Pup-dependent pathway. Functionally, protein modifier that is covalently attached to lysine residues of substrate proteins, thereby targeting them for proteasomal degradation. The tagging system is termed pupylation. The chain is Prokaryotic ubiquitin-like protein Pup from Thermobifida fusca (strain YX).